We begin with the raw amino-acid sequence, 81 residues long: MNRLMILVFAAVILALASADDVDIAKRGVPCLCVSDGPRPRGNNLSGTIWMKTGGYGGNGCPKGWHFCGKSRGLLSDCCKQ.

The first 19 residues, 1–19 (MNRLMILVFAAVILALASA), serve as a signal peptide directing secretion. Positions 20–25 (DDVDIA) are excised as a propeptide. Intrachain disulfides connect Cys-31–Cys-78, Cys-33–Cys-68, and Cys-61–Cys-79.

The protein belongs to the sea anemone sodium channel inhibitory toxin family. Type I subfamily.

Its subcellular location is the secreted. It localises to the nematocyst. Functionally, binds specifically to voltage-gated sodium channels (Nav), thereby delaying their inactivation during signal transduction. Causes death to crabs. This Actinia equina (Beadlet anemone) protein is Delta-actitoxin-Aeq2d.